The following is a 473-amino-acid chain: Bifunctional protein GlmU (473 aa).

Residues 1 to 240 (MAIHPLDVVI…AAQVAGVNSP (240 aa)) are pyrophosphorylase. Residues K25, Q83, 88–89 (GT), 110–112 (SGD), G147, E165, and N238 each bind UDP-N-acetyl-alpha-D-glucosamine. D112 contributes to the Mg(2+) binding site. N238 is a binding site for Mg(2+). A linker region spans residues 241–261 (VQLAELERVYQQRLATTLMEQ). Residues 262-473 (GVRLADPARL…WARPVKKPGV (212 aa)) are N-acetyltransferase. Residues R348 and K366 each coordinate UDP-N-acetyl-alpha-D-glucosamine. H378 (proton acceptor) is an active-site residue. UDP-N-acetyl-alpha-D-glucosamine contacts are provided by Y381 and N392. Residues A395, 401–402 (NY), S420, G438, and R455 contribute to the acetyl-CoA site.

In the N-terminal section; belongs to the N-acetylglucosamine-1-phosphate uridyltransferase family. The protein in the C-terminal section; belongs to the transferase hexapeptide repeat family. As to quaternary structure, homotrimer. Mg(2+) is required as a cofactor.

It is found in the cytoplasm. It catalyses the reaction alpha-D-glucosamine 1-phosphate + acetyl-CoA = N-acetyl-alpha-D-glucosamine 1-phosphate + CoA + H(+). The catalysed reaction is N-acetyl-alpha-D-glucosamine 1-phosphate + UTP + H(+) = UDP-N-acetyl-alpha-D-glucosamine + diphosphate. Its pathway is nucleotide-sugar biosynthesis; UDP-N-acetyl-alpha-D-glucosamine biosynthesis; N-acetyl-alpha-D-glucosamine 1-phosphate from alpha-D-glucosamine 6-phosphate (route II): step 2/2. It functions in the pathway nucleotide-sugar biosynthesis; UDP-N-acetyl-alpha-D-glucosamine biosynthesis; UDP-N-acetyl-alpha-D-glucosamine from N-acetyl-alpha-D-glucosamine 1-phosphate: step 1/1. The protein operates within bacterial outer membrane biogenesis; LPS lipid A biosynthesis. Its function is as follows. Catalyzes the last two sequential reactions in the de novo biosynthetic pathway for UDP-N-acetylglucosamine (UDP-GlcNAc). The C-terminal domain catalyzes the transfer of acetyl group from acetyl coenzyme A to glucosamine-1-phosphate (GlcN-1-P) to produce N-acetylglucosamine-1-phosphate (GlcNAc-1-P), which is converted into UDP-GlcNAc by the transfer of uridine 5-monophosphate (from uridine 5-triphosphate), a reaction catalyzed by the N-terminal domain. The chain is Bifunctional protein GlmU from Polaromonas naphthalenivorans (strain CJ2).